Consider the following 569-residue polypeptide: MPYRIDRRTYAETYGPTTGDRVRLADTELILEVEKDYTVYGDEVKFGGGKVIRDGMGQGQTSRAAGAVDTVITNALILDWWGIVKADVGLKDGRICAIGKAGNPDISDGVTIPIGPGTEAIAGEGHILTAGGIDTHIHFICPQQIETAIASGVTTLLGGGTGPATGTNATTCTPGAFHISRMLQAADGLPVNLGFFGKGNASTPEALDEQVRAGACGLKLHEDWGTTPAAIDCCLGVADRFDVQVCIHTDTLNEAGFVEDTIAAIKGRTIHTFHTEGAGGGHAPDIIRICGETNVLPSSTNPTRPYTRNTLEEHLDMLMVCHHLDSSIPEDVAFAESRIRRETIAAEDILHDLGAFSIIASDSQAMGRVGEVITRTFQTAHKMKVQRGVLEGDNSRNDNTRLKRYIAKVTINPAIAHGLDHQVGSVEVGKLADLVLWKPGFFGVKPELVLKGGSIAWAQMGDANASIPTPGPVHGRPMFASFGGAMAPSCLTFLSQAGLDAGVPEALGLRTPCVPVQNTRGIGKAQMKNNIALPKVEVDPETYEVFADGELLTCEPAEVLPMAQRYFLL.

Residues glycine 131–leucine 569 enclose the Urease domain. Residues histidine 136, histidine 138, and lysine 219 each coordinate Ni(2+). Lysine 219 bears the N6-carboxylysine mark. Position 221 (histidine 221) interacts with substrate. Residues histidine 248 and histidine 274 each coordinate Ni(2+). Catalysis depends on histidine 322, which acts as the Proton donor. Aspartate 362 contributes to the Ni(2+) binding site.

Belongs to the metallo-dependent hydrolases superfamily. Urease alpha subunit family. As to quaternary structure, heterotrimer of UreA (gamma), UreB (beta) and UreC (alpha) subunits. Three heterotrimers associate to form the active enzyme. Requires Ni cation as cofactor. Carboxylation allows a single lysine to coordinate two nickel ions.

It localises to the cytoplasm. It carries out the reaction urea + 2 H2O + H(+) = hydrogencarbonate + 2 NH4(+). It functions in the pathway nitrogen metabolism; urea degradation; CO(2) and NH(3) from urea (urease route): step 1/1. The protein is Urease subunit alpha of Synechococcus sp. (strain RCC307).